The following is a 397-amino-acid chain: MKKQILQLNLEQTSSAAAEDTNLDCSLAGYDYVLPPERIAQNPAVPRDSSRLLVVNSQTTGKETPPLHQIFRDLPDILRPGDLLIMNNTKVIPARLYGRKSSGAEVEILLLEERKFNCWLALVKPGKRFKKGTQIIFEGLGMRNLGIENSPQYSVASPHQLTATVLETDKATGGRLLQFDLPEGQSLVQLLDKFGEIPLPPYITTSQAADEQYQTVYAEEPGAIAAPTAGLHFTPELLQKLRDRNINQAFITLHVGVGTFRPVEVEDVATHQMHEEWIEVPAATVAQIKATKAAGGRIIAVGTTVVRALEGAAASGNLQEFCGKTNLFIYPGYKWQVVEGLITNFHLPRSSLLMLVSALIGRERLLNIYQEAIASQYRFYSFGDAMLILPEARGVEQ.

It belongs to the QueA family. In terms of assembly, monomer.

It localises to the cytoplasm. It catalyses the reaction 7-aminomethyl-7-carbaguanosine(34) in tRNA + S-adenosyl-L-methionine = epoxyqueuosine(34) in tRNA + adenine + L-methionine + 2 H(+). Its pathway is tRNA modification; tRNA-queuosine biosynthesis. In terms of biological role, transfers and isomerizes the ribose moiety from AdoMet to the 7-aminomethyl group of 7-deazaguanine (preQ1-tRNA) to give epoxyqueuosine (oQ-tRNA). This chain is S-adenosylmethionine:tRNA ribosyltransferase-isomerase, found in Nostoc sp. (strain PCC 7120 / SAG 25.82 / UTEX 2576).